The following is a 340-amino-acid chain: NADH-quinone oxidoreductase subunit H (340 aa).

The next 8 membrane-spanning stretches (helical) occupy residues 4–24, 78–98, 113–133, 151–171, 184–204, 244–264, 273–293, and 316–336; these read TIGILIWIIIKILVIVVPLLI, YLFVIAPLFALVPSLVGWAVI, VLYLFAMSSLGVYGVLIAGWA, VSYEIAMGFALVGVLLAAGSM, MLHWWFIPLLPLFLVFWIAGI, SMILISTFMAILFMGGWLSPF, IFFVVPGFVWLLLKISFFLFV, and VLIPVTIVWLIVTSLMVVAHV.

It belongs to the complex I subunit 1 family. As to quaternary structure, NDH-1 is composed of 14 different subunits. Subunits NuoA, H, J, K, L, M, N constitute the membrane sector of the complex.

It is found in the cell inner membrane. The enzyme catalyses a quinone + NADH + 5 H(+)(in) = a quinol + NAD(+) + 4 H(+)(out). Its function is as follows. NDH-1 shuttles electrons from NADH, via FMN and iron-sulfur (Fe-S) centers, to quinones in the respiratory chain. The immediate electron acceptor for the enzyme in this species is believed to be ubiquinone. Couples the redox reaction to proton translocation (for every two electrons transferred, four hydrogen ions are translocated across the cytoplasmic membrane), and thus conserves the redox energy in a proton gradient. This subunit may bind ubiquinone. The protein is NADH-quinone oxidoreductase subunit H of Legionella pneumophila (strain Corby).